The primary structure comprises 337 residues: Ribosomal RNA small subunit methyltransferase C (337 aa).

This sequence belongs to the methyltransferase superfamily. RsmC family. As to quaternary structure, monomer.

It is found in the cytoplasm. It catalyses the reaction guanosine(1207) in 16S rRNA + S-adenosyl-L-methionine = N(2)-methylguanosine(1207) in 16S rRNA + S-adenosyl-L-homocysteine + H(+). In terms of biological role, specifically methylates the guanine in position 1207 of 16S rRNA in the 30S particle. In Proteus mirabilis (strain HI4320), this protein is Ribosomal RNA small subunit methyltransferase C.